A 359-amino-acid polypeptide reads, in one-letter code: Alanine racemase, biosynthetic (359 aa).

Lys-34 functions as the Proton acceptor; specific for D-alanine in the catalytic mechanism. At Lys-34 the chain carries N6-(pyridoxal phosphate)lysine. Arg-129 is a binding site for substrate. Residue Tyr-255 is the Proton acceptor; specific for L-alanine of the active site. A substrate-binding site is contributed by Met-303.

It belongs to the alanine racemase family. Requires pyridoxal 5'-phosphate as cofactor.

It carries out the reaction L-alanine = D-alanine. Its pathway is amino-acid biosynthesis; D-alanine biosynthesis; D-alanine from L-alanine: step 1/1. It functions in the pathway cell wall biogenesis; peptidoglycan biosynthesis. Its function is as follows. Catalyzes the interconversion of L-alanine and D-alanine. Provides the D-alanine required for cell wall biosynthesis. This is Alanine racemase, biosynthetic (alr) from Escherichia coli O6:H1 (strain CFT073 / ATCC 700928 / UPEC).